Consider the following 299-residue polypeptide: Phosphatidylcholine-sterol acyltransferase (299 aa).

Asn30 carries an N-linked (GlcNAc...) asparagine glycan. Ser127 functions as the Nucleophile in the catalytic mechanism. Residue Asn185 is glycosylated (N-linked (GlcNAc...) asparagine). Cys226 and Cys269 are oxidised to a cystine. Residues Asp258 and His290 each act as charge relay system in the active site.

Belongs to the AB hydrolase superfamily. Lipase family.

Its subcellular location is the secreted. It carries out the reaction a sterol + a 1,2-diacyl-sn-glycero-3-phosphocholine = a sterol ester + a 1-acyl-sn-glycero-3-phosphocholine. APOA1 is the most potent activator in plasma. Also activated by APOE, APOC1 and APOA4. In terms of biological role, central enzyme in the extracellular metabolism of plasma lipoproteins. Synthesized mainly in the liver and secreted into plasma where it converts cholesterol and phosphatidylcholines (lecithins) to cholesteryl esters and lysophosphatidylcholines on the surface of high and low density lipoproteins (HDLs and LDLs). The cholesterol ester is then transported back to the liver. Has a preference for plasma 16:0-18:2 or 18:O-18:2 phosphatidylcholines. Also produced in the brain by primary astrocytes, and esterifies free cholesterol on nascent APOE-containing lipoproteins secreted from glia and influences cerebral spinal fluid (CSF) APOE- and APOA1 levels. Together with APOE and the cholesterol transporter ABCA1, plays a key role in the maturation of glial-derived, nascent lipoproteins. Required for remodeling high-density lipoprotein particles into their spherical forms. The protein is Phosphatidylcholine-sterol acyltransferase (LCAT) of Eliomys quercinus (Garden dormouse).